The primary structure comprises 277 residues: Polar tube protein 2 (277 aa).

The N-terminal stretch at 1 to 18 is a signal peptide; it reads MLLLLAITAVVSATMVHP. The N-linked (GlcNAc...) asparagine glycan is linked to Asn134. The segment covering 237 to 251 has biased composition (basic and acidic residues); the sequence is QKKEVKDTKEGEKSA. The disordered stretch occupies residues 237 to 277; it reads QKKEVKDTKEGEKSASQDSDGEGTAEDAEVQQPSADGEGLE. Residues 255–265 are compositionally biased toward acidic residues; that stretch reads SDGEGTAEDAE.

As to quaternary structure, interacts with PTP1 and PTP3.

It localises to the spore polar tube. Its function is as follows. Involved in formation of a polar tube through which the infectious agent is passed on to the host cell. The chain is Polar tube protein 2 (PTP2) from Encephalitozoon cuniculi (strain GB-M1) (Microsporidian parasite).